The primary structure comprises 151 residues: MFDVIAFLVQEYRDFSACPGPDDLARKLAAVGFEDDVIHDALDWLSSLLAQGAVPEVLAESRLPRILTQEEREGLPLEVQDFVLFLDRVAAVNNVQREQILDRLMDVPPDERSLDAARLTVLAVLWRHAAEVDALIAEELMVAIDGPMPLQ.

Belongs to the Smg family.

The chain is Protein Smg homolog from Laribacter hongkongensis (strain HLHK9).